An 825-amino-acid chain; its full sequence is Glycerol-3-phosphate acyltransferase 1, mitochondrial (825 aa).

Topologically, residues 1–87 (MDESALTLGT…FFNPSIPSLG (87 aa)) are cytoplasmic. The important for mitochondrial localization stretch occupies residues 80–120 (NPSIPSLGLRNVIYINETHTRHRGWLARRLSYVLFIQERDV). The stretch at 88–118 (LRNVIYINETHTRHRGWLARRLSYVLFIQER) is an intramembrane region. Over 119-825 (DVHKGMFATN…LEYILSLVVL (707 aa)) the chain is Cytoplasmic. An HXXXXD motif motif is present at residues 230-235 (HRSHID). CoA-binding residues include R278, R279, K288, R293, and R328. Position 380 is a phosphoserine (S380). The tract at residues 435 to 455 (SRPSGAADEGTDMSINESRNA) is disordered. R461 is a CoA binding site. Residues S685 and S692 each carry the phosphoserine modification. N6-acetyllysine is present on residues K777 and K781.

It belongs to the GPAT/DAPAT family. Highly expressed in adipose tissues and lung. Low expression in liver.

It localises to the mitochondrion outer membrane. The enzyme catalyses sn-glycerol 3-phosphate + an acyl-CoA = a 1-acyl-sn-glycero-3-phosphate + CoA. The catalysed reaction is (9Z,12Z)-octadecadienoyl-CoA + sn-glycerol 3-phosphate = 1-(9Z,12Z)-octadecadienoyl-sn-glycero-3-phosphate + CoA. It carries out the reaction sn-glycerol 3-phosphate + (9Z)-octadecenoyl-CoA = 1-(9Z-octadecenoyl)-sn-glycero-3-phosphate + CoA. It catalyses the reaction sn-glycerol 3-phosphate + octadecanoyl-CoA = 1-octadecanoyl-sn-glycero-3-phosphate + CoA. The enzyme catalyses sn-glycerol 3-phosphate + hexadecanoyl-CoA = 1-hexadecanoyl-sn-glycero-3-phosphate + CoA. The catalysed reaction is dodecanoyl-CoA + sn-glycerol 3-phosphate = 1-dodecanoyl-sn-glycerol 3-phosphate + CoA. It carries out the reaction 1-acyl-sn-glycero-3-phospho-(1'-sn-glycerol) + an acyl-CoA = a 1,2-diacyl-sn-glycero-3-phospho-(1'-sn-glycerol) + CoA. The protein operates within phospholipid metabolism; CDP-diacylglycerol biosynthesis; CDP-diacylglycerol from sn-glycerol 3-phosphate: step 1/3. Mitochondrial membrane protein that catalyzes the essential first step of biosynthesis of glycerolipids such as triglycerides, phosphatidic acids and lysophosphatidic acids. Esterifies acyl-group from acyl-coenzyme A (acyl-CoA) to the sn-1 position of glycerol-3-phosphate, to produce lysophosphatidic acid. Has a narrow hydrophobic binding cleft that selects for a linear acyl chain. Catalytic activity is higher for substrates with a 16-carbon acyl chain. The protein is Glycerol-3-phosphate acyltransferase 1, mitochondrial of Bos taurus (Bovine).